Consider the following 98-residue polypeptide: Large ribosomal subunit protein uL23 (98 aa).

The protein belongs to the universal ribosomal protein uL23 family. In terms of assembly, part of the 50S ribosomal subunit. Contacts protein L29, and trigger factor when it is bound to the ribosome.

One of the early assembly proteins it binds 23S rRNA. One of the proteins that surrounds the polypeptide exit tunnel on the outside of the ribosome. Forms the main docking site for trigger factor binding to the ribosome. The polypeptide is Large ribosomal subunit protein uL23 (Dinoroseobacter shibae (strain DSM 16493 / NCIMB 14021 / DFL 12)).